The sequence spans 337 residues: MLISQRPALTEEFIDDSRSRFVIEPLEPGFGYTLGNSLRRTLLSSIPGAAVTSLRIEGVLHEFTTIPGVKEDVSDIILNIKSLVLSSDSDEPVSMFIRKEGPGEVTGADVEVPAGVEVHNQDLHIATLNEQGKLEIEMTVERGRGYVPAATASSEIGRIPVDQIYSPVLKVSYKVEATRVEQRTDFDKLILDVETKNSITARDAMASAGKTLVELFGLAQELNHEAEGIEIGPSPQESEHIAAYSMPIEDLNFSVRSYNCLKREEIHTVGELAARTESDLLDIRNFGQKSINEVKVKLAGLGLGLKDAPEGFDITDIEGYDAETGEFIDTEGEDIAE.

Positions 1 to 223 are alpha N-terminal domain (alpha-NTD); that stretch reads MLISQRPALT…ELFGLAQELN (223 aa). The alpha C-terminal domain (alpha-CTD) stretch occupies residues 238–337; that stretch reads SEHIAAYSMP…IDTEGEDIAE (100 aa).

Belongs to the RNA polymerase alpha chain family. As to quaternary structure, homodimer. The RNAP catalytic core consists of 2 alpha, 1 beta, 1 beta' and 1 omega subunit. When a sigma factor is associated with the core the holoenzyme is formed, which can initiate transcription.

It catalyses the reaction RNA(n) + a ribonucleoside 5'-triphosphate = RNA(n+1) + diphosphate. DNA-dependent RNA polymerase catalyzes the transcription of DNA into RNA using the four ribonucleoside triphosphates as substrates. In Corynebacterium jeikeium (strain K411), this protein is DNA-directed RNA polymerase subunit alpha.